Reading from the N-terminus, the 90-residue chain is Exodeoxyribonuclease 7 small subunit (90 aa).

Residues 62–90 (QDGQANPMSSQGHTAGEYPDDEAEEAEEA) are disordered. Polar residues predominate over residues 64–74 (GQANPMSSQGH). Over residues 79-90 (YPDDEAEEAEEA) the composition is skewed to acidic residues.

The protein belongs to the XseB family. Heterooligomer composed of large and small subunits.

Its subcellular location is the cytoplasm. The catalysed reaction is Exonucleolytic cleavage in either 5'- to 3'- or 3'- to 5'-direction to yield nucleoside 5'-phosphates.. In terms of biological role, bidirectionally degrades single-stranded DNA into large acid-insoluble oligonucleotides, which are then degraded further into small acid-soluble oligonucleotides. The polypeptide is Exodeoxyribonuclease 7 small subunit (Desulfovibrio desulfuricans (strain ATCC 27774 / DSM 6949 / MB)).